The following is a 185-amino-acid chain: Ribosome-recycling factor (185 aa).

Positions 138-159 are disordered; it reads KVKKLEKDKEISEDESKKAQEQ.

This sequence belongs to the RRF family.

The protein resides in the cytoplasm. In terms of biological role, responsible for the release of ribosomes from messenger RNA at the termination of protein biosynthesis. May increase the efficiency of translation by recycling ribosomes from one round of translation to another. The polypeptide is Ribosome-recycling factor (Helicobacter acinonychis (strain Sheeba)).